The primary structure comprises 2157 residues: Mediator of RNA polymerase II transcription subunit 12-like protein (2157 aa).

Residues 1–31 (MAAFGLLSYEQRPLKRPRLGPPDVYPQDPKQ) are disordered. At Thr-462 the chain carries Phosphothreonine. Positions 1437-1456 (ELEKGQHLGSSSKKERDRQK) are enriched in basic and acidic residues. 3 disordered regions span residues 1437–1461 (ELEK…KSMS), 1724–1807 (RSYY…SQMT), and 2040–2157 (IDAV…PSHF). The span at 1771 to 1780 (TKGRKRKTKS) shows a compositional bias: basic residues. Low complexity-rich tracts occupy residues 2063–2076 (PRQQ…RLLQ), 2083–2101 (QQPQ…QSQA), and 2116–2136 (RQGL…RQLQ). Residues 2137-2148 (KQLSSNQPQQGV) show a composition bias toward polar residues.

This sequence belongs to the Mediator complex subunit 12 family. As to quaternary structure, may be a component of the Mediator complex, which is known to be composed of MED1, MED4, MED6, MED7, MED8, MED9, MED10, MED11, MED12, MED13, MED13L, MED14, MED15, MED16, MED17, MED18, MED19, MED20, MED21, MED22, MED23, MED24, MED25, MED26, MED27, MED29, MED30, MED31, CCNC, CDK8 and CDC2L6/CDK11. The MED12, MED13, CCNC and CDK8 subunits form a distinct module termed the CDK8 module. Mediator containing the CDK8 module is less active than Mediator lacking this module in supporting transcriptional activation. Individual preparations of the Mediator complex lacking one or more distinct subunits have been variously termed ARC, CRSP, DRIP, PC2, SMCC and TRAP.

It localises to the nucleus. May be a component of the Mediator complex, a coactivator involved in the regulated transcription of nearly all RNA polymerase II-dependent genes. Mediator functions as a bridge to convey information from gene-specific regulatory proteins to the basal RNA polymerase II transcription machinery. Mediator is recruited to promoters by direct interactions with regulatory proteins and serves as a scaffold for the assembly of a functional preinitiation complex with RNA polymerase II and the general transcription factors. This Mus musculus (Mouse) protein is Mediator of RNA polymerase II transcription subunit 12-like protein (Med12l).